Consider the following 320-residue polypeptide: Porphobilinogen deaminase (320 aa).

Residue cysteine 241 is modified to S-(dipyrrolylmethanemethyl)cysteine.

Belongs to the HMBS family. As to quaternary structure, monomer. It depends on dipyrromethane as a cofactor.

The catalysed reaction is 4 porphobilinogen + H2O = hydroxymethylbilane + 4 NH4(+). Its pathway is porphyrin-containing compound metabolism; protoporphyrin-IX biosynthesis; coproporphyrinogen-III from 5-aminolevulinate: step 2/4. Functionally, tetrapolymerization of the monopyrrole PBG into the hydroxymethylbilane pre-uroporphyrinogen in several discrete steps. The chain is Porphobilinogen deaminase from Thermobifida fusca (strain YX).